A 362-amino-acid chain; its full sequence is Sulfate/thiosulfate import ATP-binding protein CysA (362 aa).

An ABC transporter domain is found at 13–243 (ITVRDAYKRY…PTNAFVMSFL (231 aa)). 45–52 (GPSGSGKS) is a binding site for ATP.

It belongs to the ABC transporter superfamily. Sulfate/tungstate importer (TC 3.A.1.6) family. The complex is composed of two ATP-binding proteins (CysA), two transmembrane proteins (CysT and CysW) and a solute-binding protein (CysP).

It localises to the cell membrane. It catalyses the reaction sulfate(out) + ATP + H2O = sulfate(in) + ADP + phosphate + H(+). It carries out the reaction thiosulfate(out) + ATP + H2O = thiosulfate(in) + ADP + phosphate + H(+). Its function is as follows. Part of the ABC transporter complex CysAWTP involved in sulfate/thiosulfate import. Responsible for energy coupling to the transport system. This is Sulfate/thiosulfate import ATP-binding protein CysA from Mycolicibacterium paratuberculosis (strain ATCC BAA-968 / K-10) (Mycobacterium paratuberculosis).